We begin with the raw amino-acid sequence, 251 residues long: Insulin-induced gene 1 protein (251 aa).

Residues 1–58 (MPRLEEHCWSCSCSTSVKTKDLSSAGWIVCKTGEMMSIITSVLSHAYGSLHSLQSANL) are Cytoplasmic-facing. Residues 59–81 (IRRGLVLFIVGVVLALVLNLLQI) form a helical membrane-spanning segment. Topologically, residues 82-100 (QRNVTLFPEEVLDTLFSSA) are extracellular. The helical transmembrane segment at 101-118 (WWIPLCCGTAAAVVGLLY) threads the bilayer. The Cytoplasmic segment spans residues 119 to 133 (PCLDHHLGEPHKFKR). Residues 134–156 (EWASVMRCIAVFVGINHASAKLD) form a helical membrane-spanning segment. The Extracellular segment spans residues 157–159 (FAN). A helical membrane pass occupies residues 160–178 (NVQLSLTLAALSLGLWWTF). At 179 to 183 (DRSRS) the chain is on the cytoplasmic side. Residues 184-205 (GFGLGLTTALLATLIAQLLVYN) traverse the membrane as a helical segment. The Extracellular segment spans residues 206 to 219 (GIYQYTSPDFLYVR). A helical transmembrane segment spans residues 220–237 (SWLPCIFFSGGVTVGNIG). Over 238–251 (RQLAMGSTEKIHND) the chain is Cytoplasmic. The KxHxx signature appears at 245-251 (TEKIHND).

It belongs to the INSIG family. As to quaternary structure, interacts with scap; interaction is direct and only takes place in the presence of sterols; it prevents interaction between scap and the coat protein complex II (COPII). Associates with the SCAP-SREBP complex; association is mediated via its interaction with scap and only takes place in the presence of sterols.

The protein resides in the endoplasmic reticulum membrane. Oxysterol-binding protein that mediates feedback control of cholesterol synthesis by controlling both endoplasmic reticulum to Golgi transport of scap and degradation of hmgcr. Acts as a negative regulator of cholesterol biosynthesis by mediating the retention of the SCAP-SREBP complex in the endoplasmic reticulum, thereby blocking the processing of sterol regulatory element-binding proteins (SREBPs). Binds oxysterol, including 25-hydroxycholesterol, regulating interaction with scap and retention of the SCAP-SREBP complex in the endoplasmic reticulum. In presence of oxysterol, interacts with scap, retaining the SCAP-SREBP complex in the endoplasmic reticulum, thereby preventing scap from escorting SREBPs to the Golgi. Sterol deprivation reduces oxysterol-binding, disrupting the interaction between insig1 and scap, thereby promoting Golgi transport of the SCAP-SREBP complex, followed by processing and nuclear translocation of SREBPs. Also regulates cholesterol synthesis by regulating degradation of hmgcr. The polypeptide is Insulin-induced gene 1 protein (Danio rerio (Zebrafish)).